A 309-amino-acid chain; its full sequence is Homoserine O-succinyltransferase (309 aa).

Cys142 functions as the Acyl-thioester intermediate in the catalytic mechanism. The substrate site is built by Lys163 and Ser192. His235 functions as the Proton acceptor in the catalytic mechanism. Glu237 is a catalytic residue. Arg249 contacts substrate.

This sequence belongs to the MetA family.

It is found in the cytoplasm. It catalyses the reaction L-homoserine + succinyl-CoA = O-succinyl-L-homoserine + CoA. Its pathway is amino-acid biosynthesis; L-methionine biosynthesis via de novo pathway; O-succinyl-L-homoserine from L-homoserine: step 1/1. Functionally, transfers a succinyl group from succinyl-CoA to L-homoserine, forming succinyl-L-homoserine. The protein is Homoserine O-succinyltransferase of Enterobacter sp. (strain 638).